The chain runs to 483 residues: tRNA (guanine(37)-N(1))-methyltransferase (483 aa).

The disordered stretch occupies residues 1–24 (MEEAATLQSLSISSSSPFPNNSSP). Over residues 9 to 24 (SLSISSSSPFPNNSSP) the composition is skewed to low complexity. Residues His-252, 290-291 (DL), and Asn-379 contribute to the S-adenosyl-L-methionine site.

This sequence belongs to the class I-like SAM-binding methyltransferase superfamily. TRM5/TYW2 family. Monomer.

The protein localises to the mitochondrion matrix. Its subcellular location is the nucleus. The protein resides in the cytoplasm. The enzyme catalyses guanosine(37) in tRNA + S-adenosyl-L-methionine = N(1)-methylguanosine(37) in tRNA + S-adenosyl-L-homocysteine + H(+). Functionally, specifically methylates the N1 position of guanosine-37 in various cytoplasmic and mitochondrial tRNAs. Methylation is not dependent on the nature of the nucleoside 5' of the target nucleoside. This is the first step in the biosynthesis of wybutosine (yW), a modified base adjacent to the anticodon of tRNAs and required for accurate decoding. The sequence is that of tRNA (guanine(37)-N(1))-methyltransferase from Ajellomyces capsulatus (strain G186AR / H82 / ATCC MYA-2454 / RMSCC 2432) (Darling's disease fungus).